The following is a 121-amino-acid chain: Large ribosomal subunit protein uL24 (121 aa).

A disordered region spans residues Met-1–Met-23.

It belongs to the universal ribosomal protein uL24 family. Part of the 50S ribosomal subunit.

Its function is as follows. One of two assembly initiator proteins, it binds directly to the 5'-end of the 23S rRNA, where it nucleates assembly of the 50S subunit. In terms of biological role, located at the polypeptide exit tunnel on the outside of the subunit. The protein is Large ribosomal subunit protein uL24 of Methanoregula boonei (strain DSM 21154 / JCM 14090 / 6A8).